A 483-amino-acid polypeptide reads, in one-letter code: Uroporphyrinogen-III C-methyltransferase (483 aa).

This sequence belongs to the precorrin methyltransferase family.

It catalyses the reaction uroporphyrinogen III + 2 S-adenosyl-L-methionine = precorrin-2 + 2 S-adenosyl-L-homocysteine + H(+). This Bacillus subtilis (strain 168) protein is Uroporphyrinogen-III C-methyltransferase (nasF).